The following is a 674-amino-acid chain: DNA ligase (674 aa).

NAD(+) is bound by residues 42-46 (DNVYD), 91-92 (SM), and Glu121. The active-site N6-AMP-lysine intermediate is the Lys123. Residues Arg144, Glu178, Lys294, and Lys318 each contribute to the NAD(+) site. Zn(2+) is bound by residues Cys412, Cys415, Cys430, and Cys435. One can recognise a BRCT domain in the interval 596 to 674 (VKDSFVAGKT…ETELLANLKD (79 aa)).

The protein belongs to the NAD-dependent DNA ligase family. LigA subfamily. Mg(2+) serves as cofactor. It depends on Mn(2+) as a cofactor.

The enzyme catalyses NAD(+) + (deoxyribonucleotide)n-3'-hydroxyl + 5'-phospho-(deoxyribonucleotide)m = (deoxyribonucleotide)n+m + AMP + beta-nicotinamide D-nucleotide.. Functionally, DNA ligase that catalyzes the formation of phosphodiester linkages between 5'-phosphoryl and 3'-hydroxyl groups in double-stranded DNA using NAD as a coenzyme and as the energy source for the reaction. It is essential for DNA replication and repair of damaged DNA. In Lacticaseibacillus paracasei (strain ATCC 334 / BCRC 17002 / CCUG 31169 / CIP 107868 / KCTC 3260 / NRRL B-441) (Lactobacillus paracasei), this protein is DNA ligase.